Reading from the N-terminus, the 423-residue chain is MDIDQYMTDLGRRARHASRAMARASTAAKNAALEAVAVAIEREADTLRQANARDLARARDKGHDAAFIDRLTLSDKALKTMVEGLRQVAALADPIGEISNLKFRPSGIQVGQMRVPLGVIGIIYESRPNVTIDAAALCLKSGNATILRGGSEALECNTALARLIGEGLDKAGLPQEAVQVVETSDRAAVGKLITMTDYVDVIVPRGGKSLIARLMEESRVPMIKHLDGICHVYVDDRADVAKALNVCDNAKTHRYGTCNTMETLLVARGIAAHVLPALGKLYREKEVELRVDSAARAVLTEAGVAPLVDATEEDWRTEYLAPVLAVKVVDGIDDAIGHINEYGSHHTDAIVTEDHDRAMRFLREVDSASVMVNASTRFADGFEFGLGAEIGISNDKLHARGPVGLEGLTSLKYVVLGHGEGRQ.

This sequence belongs to the gamma-glutamyl phosphate reductase family.

It localises to the cytoplasm. It carries out the reaction L-glutamate 5-semialdehyde + phosphate + NADP(+) = L-glutamyl 5-phosphate + NADPH + H(+). It participates in amino-acid biosynthesis; L-proline biosynthesis; L-glutamate 5-semialdehyde from L-glutamate: step 2/2. In terms of biological role, catalyzes the NADPH-dependent reduction of L-glutamate 5-phosphate into L-glutamate 5-semialdehyde and phosphate. The product spontaneously undergoes cyclization to form 1-pyrroline-5-carboxylate. This is Gamma-glutamyl phosphate reductase from Paraburkholderia phymatum (strain DSM 17167 / CIP 108236 / LMG 21445 / STM815) (Burkholderia phymatum).